We begin with the raw amino-acid sequence, 41 residues long: Large ribosomal subunit protein bL36 (41 aa).

Belongs to the bacterial ribosomal protein bL36 family.

This is Large ribosomal subunit protein bL36 from Beijerinckia indica subsp. indica (strain ATCC 9039 / DSM 1715 / NCIMB 8712).